The sequence spans 240 residues: Uridylate kinase (240 aa).

An ATP-binding site is contributed by 12–15; sequence KLSG. The segment at 20-25 is involved in allosteric activation by GTP; it reads GEQGNG. A UMP-binding site is contributed by Gly54. The ATP site is built by Gly55 and Arg59. UMP-binding positions include Asp74 and 135-142; that span reads TGNPYFST. Asn163, Tyr169, and Asp172 together coordinate ATP.

This sequence belongs to the UMP kinase family. Homohexamer.

The protein resides in the cytoplasm. It catalyses the reaction UMP + ATP = UDP + ADP. It participates in pyrimidine metabolism; CTP biosynthesis via de novo pathway; UDP from UMP (UMPK route): step 1/1. Its activity is regulated as follows. Allosterically activated by GTP. Inhibited by UTP. Its function is as follows. Catalyzes the reversible phosphorylation of UMP to UDP. The polypeptide is Uridylate kinase (Bacillus velezensis (strain DSM 23117 / BGSC 10A6 / LMG 26770 / FZB42) (Bacillus amyloliquefaciens subsp. plantarum)).